The sequence spans 955 residues: Valine--tRNA ligase (955 aa).

A 'HIGH' region motif is present at residues 41 to 51 (PNITGSLHMGH). A 'KMSKS' region motif is present at residues 554 to 558 (KMSKS). Residue Lys557 participates in ATP binding. Residues 926–946 (QEKNKLLKLNEINLKLSEQIK) are a coiled coil.

This sequence belongs to the class-I aminoacyl-tRNA synthetase family. ValS type 1 subfamily. As to quaternary structure, monomer.

It is found in the cytoplasm. It carries out the reaction tRNA(Val) + L-valine + ATP = L-valyl-tRNA(Val) + AMP + diphosphate. Its function is as follows. Catalyzes the attachment of valine to tRNA(Val). As ValRS can inadvertently accommodate and process structurally similar amino acids such as threonine, to avoid such errors, it has a 'posttransfer' editing activity that hydrolyzes mischarged Thr-tRNA(Val) in a tRNA-dependent manner. This Buchnera aphidicola subsp. Acyrthosiphon pisum (strain APS) (Acyrthosiphon pisum symbiotic bacterium) protein is Valine--tRNA ligase.